A 142-amino-acid polypeptide reads, in one-letter code: Truncated non-functional hemagglutinin-esterase homolog (142 aa).

Residues 1 to 117 (MNFTVPVQAI…ESVDVISSSY (117 aa)) are Virion surface-facing. Asparagine 2 carries N-linked (GlcNAc...) asparagine; by host glycosylation. Cysteine 28 and cysteine 33 are joined by a disulfide. Residues asparagine 46 and asparagine 67 are each glycosylated (N-linked (GlcNAc...) asparagine; by host). Cysteine 70 and cysteine 95 are oxidised to a cystine. A helical transmembrane segment spans residues 118-138 (FVATWVLLVVVIILVFIIISF). Residues 139-142 (CISN) are Intravirion-facing.

Belongs to the influenza type C/coronaviruses hemagglutinin-esterase family. In terms of assembly, homodimer. In terms of processing, N-glycosylated.

Its subcellular location is the virion membrane. The protein resides in the host cell membrane. In Berne virus (BEV), this protein is Truncated non-functional hemagglutinin-esterase homolog (HE).